The chain runs to 396 residues: Schizokinen exporter SchE (396 aa).

The N-terminal stretch at M1 to A25 is a signal peptide. Topologically, residues L26–V39 are cytoplasmic. A helical transmembrane segment spans residues I40–I60. At D61–G73 the chain is on the periplasmic side. Residues W74–I94 traverse the membrane as a helical segment. Topologically, residues Q95–C104 are cytoplasmic. The chain crosses the membrane as a helical span at residues M105–L127. Residues E128–A137 lie on the Periplasmic side of the membrane. A helical membrane pass occupies residues I138–L158. Topologically, residues D159–G162 are cytoplasmic. Residues W163 to I183 form a helical membrane-spanning segment. Residues Y184 to A214 lie on the Periplasmic side of the membrane. Residues L215–I235 form a helical membrane-spanning segment. Residues R236–W251 are Cytoplasmic-facing. The chain crosses the membrane as a helical span at residues I252–I272. The Periplasmic portion of the chain corresponds to V273 to L281. A helical membrane pass occupies residues I282 to V302. Over S303–S304 the chain is Cytoplasmic. A helical membrane pass occupies residues L305–A325. The Periplasmic portion of the chain corresponds to L326–Q346. The next 2 helical transmembrane spans lie at V347–T367 and M368–I388. Residues T389–S396 are Periplasmic-facing.

The protein belongs to the major facilitator superfamily.

It localises to the cell inner membrane. Its function is as follows. Involved in the TolC-like protein HgdD-dependent secretion of schizokinen, a dihydroxamate-type siderophore. Transports schizokinen from the cytoplasm to the periplasm. In Nostoc sp. (strain PCC 7120 / SAG 25.82 / UTEX 2576), this protein is Schizokinen exporter SchE.